The primary structure comprises 164 residues: Biotin carboxyl carrier protein of acetyl-CoA carboxylase (164 aa).

One can recognise a Biotinyl-binding domain in the interval 86 to 162 (GDFIVSPLVG…QFGSKLFRIV (77 aa)). Lysine 128 is subject to N6-biotinyllysine.

As to quaternary structure, homodimer.

Its pathway is lipid metabolism; fatty acid biosynthesis. Its function is as follows. This protein is a component of the acetyl coenzyme A carboxylase complex; first, biotin carboxylase catalyzes the carboxylation of the carrier protein and then the transcarboxylase transfers the carboxyl group to form malonyl-CoA. This is Biotin carboxyl carrier protein of acetyl-CoA carboxylase (accB) from Chlamydia trachomatis serovar D (strain ATCC VR-885 / DSM 19411 / UW-3/Cx).